We begin with the raw amino-acid sequence, 280 residues long: Bifunctional protein FolD (280 aa).

NADP(+) is bound by residues 164–166 (GRS), Ser-189, and Val-230.

Belongs to the tetrahydrofolate dehydrogenase/cyclohydrolase family. As to quaternary structure, homodimer.

The enzyme catalyses (6R)-5,10-methylene-5,6,7,8-tetrahydrofolate + NADP(+) = (6R)-5,10-methenyltetrahydrofolate + NADPH. It carries out the reaction (6R)-5,10-methenyltetrahydrofolate + H2O = (6R)-10-formyltetrahydrofolate + H(+). It functions in the pathway one-carbon metabolism; tetrahydrofolate interconversion. Catalyzes the oxidation of 5,10-methylenetetrahydrofolate to 5,10-methenyltetrahydrofolate and then the hydrolysis of 5,10-methenyltetrahydrofolate to 10-formyltetrahydrofolate. This Geotalea daltonii (strain DSM 22248 / JCM 15807 / FRC-32) (Geobacter daltonii) protein is Bifunctional protein FolD.